Consider the following 253-residue polypeptide: tRNA pseudouridine synthase A (253 aa).

The Nucleophile role is filled by D53. Substrate is bound at residue Y111.

It belongs to the tRNA pseudouridine synthase TruA family. As to quaternary structure, homodimer.

The enzyme catalyses uridine(38/39/40) in tRNA = pseudouridine(38/39/40) in tRNA. Its function is as follows. Formation of pseudouridine at positions 38, 39 and 40 in the anticodon stem and loop of transfer RNAs. The chain is tRNA pseudouridine synthase A from Oceanobacillus iheyensis (strain DSM 14371 / CIP 107618 / JCM 11309 / KCTC 3954 / HTE831).